The chain runs to 474 residues: Glutamate--tRNA ligase (474 aa).

A 'HIGH' region motif is present at residues 9-19 (PSPTGLLHMGG). A 'KMSKS' region motif is present at residues 238-242 (KLSKR). Residue Lys241 participates in ATP binding.

Belongs to the class-I aminoacyl-tRNA synthetase family. Glutamate--tRNA ligase type 1 subfamily. In terms of assembly, monomer.

The protein localises to the cytoplasm. It carries out the reaction tRNA(Glu) + L-glutamate + ATP = L-glutamyl-tRNA(Glu) + AMP + diphosphate. In terms of biological role, catalyzes the attachment of glutamate to tRNA(Glu) in a two-step reaction: glutamate is first activated by ATP to form Glu-AMP and then transferred to the acceptor end of tRNA(Glu). The chain is Glutamate--tRNA ligase from Buchnera aphidicola subsp. Cinara cedri (strain Cc).